The sequence spans 446 residues: Glutamine synthetase (446 aa).

The region spanning 15 to 103 is the GS beta-grasp domain; that stretch reads ENVKFLRLQI…LICDVYYPDG (89 aa). Positions 110-446 constitute a GS catalytic domain; the sequence is PRYVLKRQIE…WELDRYLATY (337 aa). Mg(2+)-binding residues include glutamate 134 and glutamate 136. Glutamate 186 provides a ligand contact to ATP. Glutamate 191 and glutamate 198 together coordinate Mg(2+). L-glutamate-binding positions include 242 to 243 and glycine 243; that span reads NG. Histidine 247 contributes to the Mg(2+) binding site. Serine 251 is an ATP binding site. L-glutamate contacts are provided by arginine 300, glutamate 306, and arginine 318. Residues arginine 318 and arginine 323 each contribute to the ATP site. Mg(2+) is bound at residue glutamate 335. Arginine 337 contributes to the L-glutamate binding site.

It belongs to the glutamine synthetase family. Interacts with GCBP (TTHA1554). Requires Mg(2+) as cofactor.

It localises to the cytoplasm. It carries out the reaction L-glutamate + NH4(+) + ATP = L-glutamine + ADP + phosphate + H(+). With respect to regulation, activity increases by approximately two-fold in the presence of GCBP. Catalyzes the ATP-dependent biosynthesis of glutamine from glutamate and ammonia. The chain is Glutamine synthetase from Thermus thermophilus (strain ATCC 27634 / DSM 579 / HB8).